The following is a 332-amino-acid chain: Ketol-acid reductoisomerase (NAD(+)) (332 aa).

A KARI N-terminal Rossmann domain is found at 1 to 181 (MKIYYDQDAD…GATRAGVIQT (181 aa)). Residues 24–27 (YGSQ), Ser-50, and 82–85 (DEKQ) contribute to the NAD(+) site. Residue His-107 is part of the active site. Gly-133 is a binding site for NAD(+). Positions 182–327 (TFKEETETDL…ARLRGMMPWL (146 aa)) constitute a KARI C-terminal knotted domain. The Mg(2+) site is built by Asp-190, Glu-194, Glu-226, and Glu-230. A substrate-binding site is contributed by Ser-251.

This sequence belongs to the ketol-acid reductoisomerase family. Mg(2+) is required as a cofactor.

It catalyses the reaction (2R)-2,3-dihydroxy-3-methylbutanoate + NAD(+) = (2S)-2-acetolactate + NADH + H(+). It functions in the pathway amino-acid biosynthesis; L-isoleucine biosynthesis; L-isoleucine from 2-oxobutanoate: step 2/4. It participates in amino-acid biosynthesis; L-valine biosynthesis; L-valine from pyruvate: step 2/4. In terms of biological role, involved in the biosynthesis of branched-chain amino acids (BCAA). Catalyzes an alkyl-migration followed by a ketol-acid reduction of (S)-2-acetolactate (S2AL) to yield (R)-2,3-dihydroxy-isovalerate. In the isomerase reaction, S2AL is rearranged via a Mg-dependent methyl migration to produce 3-hydroxy-3-methyl-2-ketobutyrate (HMKB). In the reductase reaction, this 2-ketoacid undergoes a metal-dependent reduction by NADH to yield (R)-2,3-dihydroxy-isovalerate. The sequence is that of Ketol-acid reductoisomerase (NAD(+)) from Thermacetogenium phaeum (strain ATCC BAA-254 / DSM 26808 / PB).